Here is a 479-residue protein sequence, read N- to C-terminus: Cysteine--tRNA ligase (479 aa).

Cys-28 lines the Zn(2+) pocket. Positions 30–40 (PTVYDHAHLGH) match the 'HIGH' region motif. Residues Cys-207, His-232, and Glu-236 each contribute to the Zn(2+) site. The short motif at 264 to 268 (KMSKS) is the 'KMSKS' region element. Lys-267 provides a ligand contact to ATP.

This sequence belongs to the class-I aminoacyl-tRNA synthetase family. It depends on Zn(2+) as a cofactor.

Its subcellular location is the cytoplasm. It carries out the reaction tRNA(Cys) + L-cysteine + ATP = L-cysteinyl-tRNA(Cys) + AMP + diphosphate. This is Cysteine--tRNA ligase from Methanococcus aeolicus (strain ATCC BAA-1280 / DSM 17508 / OCM 812 / Nankai-3).